Here is a 299-residue protein sequence, read N- to C-terminus: Tyrosine recombinase XerD (299 aa).

Residues 2–89 (ETVNNNLQQF…AIRSFHQFLL (88 aa)) enclose the Core-binding (CB) domain. Residues 110–293 (RLPKALTIEE…TKTRMRDVYA (184 aa)) form the Tyr recombinase domain. Residues Arg150, Lys174, His245, Arg248, and His271 contribute to the active site. The O-(3'-phospho-DNA)-tyrosine intermediate role is filled by Tyr280.

Belongs to the 'phage' integrase family. XerD subfamily. Forms a cyclic heterotetrameric complex composed of two molecules of XerC and two molecules of XerD.

It is found in the cytoplasm. Site-specific tyrosine recombinase, which acts by catalyzing the cutting and rejoining of the recombining DNA molecules. The XerC-XerD complex is essential to convert dimers of the bacterial chromosome into monomers to permit their segregation at cell division. It also contributes to the segregational stability of plasmids. The chain is Tyrosine recombinase XerD from Halalkalibacterium halodurans (strain ATCC BAA-125 / DSM 18197 / FERM 7344 / JCM 9153 / C-125) (Bacillus halodurans).